A 217-amino-acid chain; its full sequence is Non-structural protein NS3 (217 aa).

It belongs to the orbivirus NS3 family.

May play a role in the release of virions from infected cells. In African horse sickness virus 9 (AHSV-9), this protein is Non-structural protein NS3 (Segment-10).